Reading from the N-terminus, the 141-residue chain is Large ribosomal subunit protein uL11 (141 aa).

It belongs to the universal ribosomal protein uL11 family. As to quaternary structure, part of the ribosomal stalk of the 50S ribosomal subunit. Interacts with L10 and the large rRNA to form the base of the stalk. L10 forms an elongated spine to which L12 dimers bind in a sequential fashion forming a multimeric L10(L12)X complex. In terms of processing, one or more lysine residues are methylated.

Functionally, forms part of the ribosomal stalk which helps the ribosome interact with GTP-bound translation factors. The protein is Large ribosomal subunit protein uL11 of Gloeothece citriformis (strain PCC 7424) (Cyanothece sp. (strain PCC 7424)).